The sequence spans 277 residues: Large ribosomal subunit protein uL2 (277 aa).

The segment at 223–277 is disordered; that stretch reads VVMNPIDHPHGGGEGRTSGGRHPVTPWGKPTKGKKTRSNKSTNKFILISRHKRKK.

The protein belongs to the universal ribosomal protein uL2 family. As to quaternary structure, part of the 50S ribosomal subunit. Forms a bridge to the 30S subunit in the 70S ribosome.

One of the primary rRNA binding proteins. Required for association of the 30S and 50S subunits to form the 70S ribosome, for tRNA binding and peptide bond formation. It has been suggested to have peptidyltransferase activity; this is somewhat controversial. Makes several contacts with the 16S rRNA in the 70S ribosome. The polypeptide is Large ribosomal subunit protein uL2 (Nitrobacter hamburgensis (strain DSM 10229 / NCIMB 13809 / X14)).